The chain runs to 185 residues: ATP synthase subunit delta (185 aa).

Belongs to the ATPase delta chain family. As to quaternary structure, F-type ATPases have 2 components, F(1) - the catalytic core - and F(0) - the membrane proton channel. F(1) has five subunits: alpha(3), beta(3), gamma(1), delta(1), epsilon(1). F(0) has three main subunits: a(1), b(2) and c(10-14). The alpha and beta chains form an alternating ring which encloses part of the gamma chain. F(1) is attached to F(0) by a central stalk formed by the gamma and epsilon chains, while a peripheral stalk is formed by the delta and b chains.

It localises to the cell inner membrane. Functionally, f(1)F(0) ATP synthase produces ATP from ADP in the presence of a proton or sodium gradient. F-type ATPases consist of two structural domains, F(1) containing the extramembraneous catalytic core and F(0) containing the membrane proton channel, linked together by a central stalk and a peripheral stalk. During catalysis, ATP synthesis in the catalytic domain of F(1) is coupled via a rotary mechanism of the central stalk subunits to proton translocation. This protein is part of the stalk that links CF(0) to CF(1). It either transmits conformational changes from CF(0) to CF(1) or is implicated in proton conduction. In Coxiella burnetii (strain CbuG_Q212) (Coxiella burnetii (strain Q212)), this protein is ATP synthase subunit delta.